The following is a 400-amino-acid chain: Argininosuccinate synthase (400 aa).

8-16 (AYSGGLDTS) provides a ligand contact to ATP. Residues Tyr87 and Ser92 each contribute to the L-citrulline site. An ATP-binding site is contributed by Gly117. L-aspartate contacts are provided by Thr119, Asn123, and Asp124. Asn123 contributes to the L-citrulline binding site. L-citrulline-binding residues include Arg127, Ser175, Glu259, and Tyr271.

This sequence belongs to the argininosuccinate synthase family. Type 1 subfamily. As to quaternary structure, homotetramer.

The protein resides in the cytoplasm. It carries out the reaction L-citrulline + L-aspartate + ATP = 2-(N(omega)-L-arginino)succinate + AMP + diphosphate + H(+). It functions in the pathway amino-acid biosynthesis; L-arginine biosynthesis; L-arginine from L-ornithine and carbamoyl phosphate: step 2/3. The sequence is that of Argininosuccinate synthase from Frankia casuarinae (strain DSM 45818 / CECT 9043 / HFP020203 / CcI3).